A 282-amino-acid chain; its full sequence is Energy-coupling factor transporter ATP-binding protein EcfA1 (282 aa).

The ABC transporter domain occupies 6-243; that stretch reads ISFDHVTFTY…VEMLKRIGLD (238 aa). 40–47 is a binding site for ATP; sequence GHNGSGKS.

It belongs to the ABC transporter superfamily. Energy-coupling factor EcfA family. In terms of assembly, forms a stable energy-coupling factor (ECF) transporter complex composed of 2 membrane-embedded substrate-binding proteins (S component), 2 ATP-binding proteins (A component) and 2 transmembrane proteins (T component).

It is found in the cell membrane. ATP-binding (A) component of a common energy-coupling factor (ECF) ABC-transporter complex. Unlike classic ABC transporters this ECF transporter provides the energy necessary to transport a number of different substrates. The protein is Energy-coupling factor transporter ATP-binding protein EcfA1 of Lactobacillus delbrueckii subsp. bulgaricus (strain ATCC BAA-365 / Lb-18).